The primary structure comprises 716 residues: DNA ligase (716 aa).

Residues 49-53 (DAAYD), 98-99 (SL), and glutamate 132 each bind NAD(+). Residue lysine 134 is the N6-AMP-lysine intermediate of the active site. Arginine 155, glutamate 192, lysine 308, and lysine 332 together coordinate NAD(+). Residues cysteine 437, cysteine 439, cysteine 461, and cysteine 467 each contribute to the Zn(2+) site. In terms of domain architecture, BRCT spans 638–716 (KRNSPIATKT…EDEWLQLIGE (79 aa)).

It belongs to the NAD-dependent DNA ligase family. LigA subfamily. It depends on Mg(2+) as a cofactor. The cofactor is Mn(2+).

The catalysed reaction is NAD(+) + (deoxyribonucleotide)n-3'-hydroxyl + 5'-phospho-(deoxyribonucleotide)m = (deoxyribonucleotide)n+m + AMP + beta-nicotinamide D-nucleotide.. In terms of biological role, DNA ligase that catalyzes the formation of phosphodiester linkages between 5'-phosphoryl and 3'-hydroxyl groups in double-stranded DNA using NAD as a coenzyme and as the energy source for the reaction. It is essential for DNA replication and repair of damaged DNA. The polypeptide is DNA ligase (Bradyrhizobium sp. (strain ORS 278)).